A 643-amino-acid chain; its full sequence is Pescadillo homolog (643 aa).

Residues 319–412 (KLKTLFKGLK…RLLPTNKYFM (94 aa)) form the BRCT domain. 3 disordered regions span residues 437 to 475 (AARK…PENE), 492 to 571 (TDSL…YREN), and 609 to 643 (DKNA…QILA). Acidic residues predominate over residues 464–475 (SDDEEVQDPENE). Basic and acidic residues predominate over residues 492 to 518 (TDSLNSGKKEGADDATDNGKDAAEKKQ). The span at 524 to 544 (GESDDEDEEEEDDDDGEEEED) shows a compositional bias: acidic residues. Residues 569–643 (RENEAEKKIV…QKQQRKQILA (75 aa)) are a coiled coil. A compositionally biased stretch (basic and acidic residues) spans 609-635 (DKNARLLANKRERIEKQKRAEQMEKQK).

It belongs to the pescadillo family.

It localises to the nucleus. It is found in the nucleolus. The protein localises to the nucleoplasm. Functionally, required for maturation of ribosomal RNAs and formation of the large ribosomal subunit. This chain is Pescadillo homolog, found in Anopheles gambiae (African malaria mosquito).